Here is a 731-residue protein sequence, read N- to C-terminus: 1,4-alpha-glucan branching enzyme GlgB (731 aa).

The Nucleophile role is filled by Asp409. The active-site Proton donor is the Glu462.

This sequence belongs to the glycosyl hydrolase 13 family. GlgB subfamily. Monomer.

It carries out the reaction Transfers a segment of a (1-&gt;4)-alpha-D-glucan chain to a primary hydroxy group in a similar glucan chain.. It participates in glycan biosynthesis; glycogen biosynthesis. Its function is as follows. Catalyzes the formation of the alpha-1,6-glucosidic linkages in glycogen by scission of a 1,4-alpha-linked oligosaccharide from growing alpha-1,4-glucan chains and the subsequent attachment of the oligosaccharide to the alpha-1,6 position. The sequence is that of 1,4-alpha-glucan branching enzyme GlgB (glgB) from Dickeya chrysanthemi (Pectobacterium chrysanthemi).